A 336-amino-acid polypeptide reads, in one-letter code: Dihydroorotate dehydrogenase (quinone) (336 aa).

Residues 62 to 66 (AGLDK) and Thr86 each bind FMN. Position 66 (Lys66) interacts with substrate. 111-115 (NRMGF) provides a ligand contact to substrate. FMN-binding residues include Asn139 and Asn172. Asn172 is a substrate binding site. The active-site Nucleophile is the Ser175. Asn177 is a binding site for substrate. FMN is bound by residues Lys217 and Thr245. 246 to 247 (NT) provides a ligand contact to substrate. FMN-binding positions include Gly268, Gly297, and 318 to 319 (YS).

The protein belongs to the dihydroorotate dehydrogenase family. Type 2 subfamily. As to quaternary structure, monomer. The cofactor is FMN.

Its subcellular location is the cell membrane. It catalyses the reaction (S)-dihydroorotate + a quinone = orotate + a quinol. It participates in pyrimidine metabolism; UMP biosynthesis via de novo pathway; orotate from (S)-dihydroorotate (quinone route): step 1/1. Catalyzes the conversion of dihydroorotate to orotate with quinone as electron acceptor. This is Dihydroorotate dehydrogenase (quinone) from Klebsiella pneumoniae subsp. pneumoniae (strain ATCC 700721 / MGH 78578).